A 612-amino-acid chain; its full sequence is Oligopeptide transport ATP-binding protein OppD (612 aa).

Residues 5–255 (LEVTDLAVTF…RRMPYTVGLL (251 aa)) form the ABC transporter 1 domain. 13 residues coordinate ATP: serine 43, glycine 44, serine 45, glycine 46, lysine 47, serine 48, alanine 49, tyrosine 61, glutamine 96, arginine 147, glycine 158, glutamate 159, and histidine 213. 4 residues coordinate [4Fe-4S] cluster: cysteine 286, cysteine 292, cysteine 299, and cysteine 317. Residues 350–600 (VRVRHLVKTY…PKHEYTRRLL (251 aa)) enclose the ABC transporter 2 domain. ATP-binding residues include serine 396, glycine 397, serine 398, glycine 399, lysine 400, serine 401, threonine 402, glutamine 445, arginine 495, glutamate 499, glycine 503, and histidine 558.

Belongs to the ABC transporter superfamily. The complex is composed of an ATP-binding protein (OppD), two transmembrane proteins (OppB and OppC) and a solute-binding protein (OppA).

The protein resides in the cell inner membrane. It catalyses the reaction a [peptide](out) + ATP + H2O = a [peptide](in) + ADP + phosphate + H(+). Its function is as follows. Part of the ABC transporter complex OppABCD involved in the uptake of oligopeptides. Responsible for energy coupling to the transport system. This is Oligopeptide transport ATP-binding protein OppD from Mycobacterium bovis (strain ATCC BAA-935 / AF2122/97).